The following is a 285-amino-acid chain: Probable adenylate kinase 6, chloroplastic (285 aa).

A chloroplast-targeting transit peptide spans 1–33 (MAAISRAIRACAAAGSRRSMASSAKEVAAAGAR). Residue 63-68 (GVGKGT) participates in ATP binding. The interval 83 to 112 (ATGDLVRDALASPGPFSEQLAEIVNNGKLV) is NMP. AMP is bound by residues Thr-84, Arg-89, 110–112 (KLV), 140–143 (GFPR), and Gln-147. Residues 176–224 (GRRMCSQCGGNFNVASIDMEGENGGPRMYMPPLLPPPQCESKLITRPDD) form an LID region. ATP-binding positions include Arg-177 and 186–187 (NF). AMP-binding residues include Arg-221 and Arg-232.

This sequence belongs to the adenylate kinase family.

It localises to the plastid. The protein localises to the chloroplast. The enzyme catalyses AMP + ATP = 2 ADP. In terms of biological role, catalyzes the reversible transfer of the terminal phosphate group between ATP and AMP. Plays an important role in cellular energy homeostasis and in adenine nucleotide metabolism. This Oryza sativa subsp. japonica (Rice) protein is Probable adenylate kinase 6, chloroplastic.